The sequence spans 665 residues: DNA ligase (665 aa).

NAD(+) is bound by residues 31-35, 80-81, and Glu-110; these read DQEFD and SL. The active-site N6-AMP-lysine intermediate is the Lys-112. 4 residues coordinate NAD(+): Arg-133, Glu-170, Lys-285, and Lys-309. Zn(2+) contacts are provided by Cys-403, Cys-406, Cys-421, and Cys-427. Positions 587–665 constitute a BRCT domain; the sequence is EHTDKLAGKS…SEEEFLQMIE (79 aa).

Belongs to the NAD-dependent DNA ligase family. LigA subfamily. Mg(2+) is required as a cofactor. Mn(2+) serves as cofactor.

It catalyses the reaction NAD(+) + (deoxyribonucleotide)n-3'-hydroxyl + 5'-phospho-(deoxyribonucleotide)m = (deoxyribonucleotide)n+m + AMP + beta-nicotinamide D-nucleotide.. DNA ligase that catalyzes the formation of phosphodiester linkages between 5'-phosphoryl and 3'-hydroxyl groups in double-stranded DNA using NAD as a coenzyme and as the energy source for the reaction. It is essential for DNA replication and repair of damaged DNA. The polypeptide is DNA ligase (Phocaeicola vulgatus (strain ATCC 8482 / DSM 1447 / JCM 5826 / CCUG 4940 / NBRC 14291 / NCTC 11154) (Bacteroides vulgatus)).